The primary structure comprises 45 residues: Cytochrome c6 (45 aa).

Cys12, Cys15, and His16 together coordinate heme c.

It belongs to the cytochrome c family. PetJ subfamily. As to quaternary structure, monomer. Binds 1 heme c group covalently per subunit.

The protein localises to the cellular thylakoid lumen. Functionally, functions as an electron carrier between membrane-bound cytochrome b6-f and photosystem I in oxygenic photosynthesis. The polypeptide is Cytochrome c6 (petJ) (Prochlorothrix hollandica).